An 862-amino-acid polypeptide reads, in one-letter code: Axin-1 (862 aa).

Residues 1–78 (MNIQEQGFPL…GYEPEGSASP (78 aa)) form a disordered region. The short motif at 20–29 (APRPPVPGEE) is the Tankyrase-binding motif element. S75 and S77 each carry phosphoserine; by CK1. The 124-residue stretch at 88–211 (SLHSLLDDQD…LKSDIYLEYT (124 aa)) folds into the RGS domain. An interaction with TP53 region spans residues 209–338 (EYTRTGSESP…DADTLSLTDS (130 aa)). Disordered regions lie at residues 215–289 (SESP…YSEG) and 316–344 (TSAN…DGIP). S217 is modified (phosphoserine; by CK1). Positions 242–258 (NEDEEWKCDQDMDEDDG) are enriched in acidic residues. Over residues 325-339 (SLSSDADTLSLTDSS) the composition is skewed to low complexity. The interval 348–433 (IRKQHRREMQ…DGDPSSGPPG (86 aa)) is interaction with GSK3B. Residues 353 to 411 (RREMQESVQVNGRVPLPHIPRTYRVPKEVRVEPQKFAEELIHRLEAVQRTREAEEKLEE) are interaction with SIAH1 and SIAH2. The disordered stretch occupies residues 413-441 (LKRVRMEEEGEDGDPSSGPPGPCHKLPPA). Over residues 429-441 (SGPPGPCHKLPPA) the composition is skewed to pro residues. The tract at residues 434-502 (PCHKLPPAPA…SPDSGHVAKM (69 aa)) is interaction with CTNNB1. Position 469 is a phosphoserine; by CK1 (S469). The segment at 480-500 (RTPGRQSPGPGHRSPDSGHVA) is disordered. T481 is subject to Phosphothreonine; by GSK3-beta. S486, S493, and S511 each carry phosphoserine. An interaction with RNF111 region spans residues 507-757 (GGAASGHGKH…PVLHVVPAVS (251 aa)). The segment covering 531-544 (HHRHVHHHVHHSTA) has biased composition (basic residues). Disordered stretches follow at residues 531–629 (HHRH…AEKN) and 641–679 (KEIS…GPQL). Residues 545–556 (RPKEQVEAEATR) show a composition bias toward basic and acidic residues. The interval 575–789 (SRGYSESVGA…CDSIVVAYYF (215 aa)) is interaction with PPP2CA. A Phosphoserine modification is found at S581. The interval 677–752 (PQLRTSVQPS…RPACAPVLHV (76 aa)) is interaction with HIPK2. Residues 780–862 (CDSIVVAYYF…KIIGKVEKVD (83 aa)) form the DIX domain. Residues K857 and K860 each participate in a glycyl lysine isopeptide (Lys-Gly) (interchain with G-Cter in SUMO) cross-link.

In terms of assembly, homodimer. Interacts with ZBED3; the interaction is direct, enhanced by protein kinase GSK3B and casein kinase CSNK1E activities and decreases GSK3B-induced beta-catenin serine and threonine phosphorylations. Component of the beta-catenin destruction complex, containing at least, CTNNB1, an axin and GSK3B, that regulates CTNNB1 protein levels through phosphorylation and ubiquitination. Interacts with CTNNB1 (via the armadillo repeats 2-7). Interacts with GSK3B; the interaction hyperphosphorylates CTNNB1 leading to its ubiquitination and destruction. Component of the AXIN1-HIPK2-TP53 complex. Interacts directly in the complex with TP53 and HIPK2. Interacts with DAXX; the interaction stimulates the interaction of DAXX with TP53, stimulates 'Ser-46' phosphorylation of TP53 and induces cell death on UV irradiation. Also binds APC, SMAD6, SMAD7 and RNF111. Interacts with DIXDC1; prevents interaction with MAP3K1. Interacts with MAP3K4. Interacts with ANKRD6 and AIDA. Interacts with MDFI; the interaction decreases AXIN1-mediated JUN N-terminal kinase (JNK) activation. Interacts with MDFIC; the interaction inhibits beta-cateninin-mediated signaling and AXIN1-mediated JUN N-terminal kinase (JNK) activation. Interacts with LRP5 (via its phosphorylated PPPSP motifs); the interaction is stimulated by WNT1 and GSK3B and activates beta-catenin signaling. Interacts (via the C-terminal) with PPP1CA; the interaction dephosphorylates AXIN1 and regulates interaction with GSK3B. Interacts with PPP2CA; the interaction dephosphorylates AXIN1. Interacts with MACF1. Found in a complex composed of MACF1, APC, AXIN1, CTNNB1 and GSK3B. Interacts with TNKS. Interacts with DAB2; the interaction is mutually exclusive with the AXIN1:PPP1CA interaction. Interacts with WDR26. Interacts with GID8. Interacts with SIAH1 and SIAH2; both probably catalyze AXIN1 ubiquitination and subsequent proteasome-mediated ubiquitin-dependent degradation. Interaction with GSK3B and AXIN1 is competitive. Phosphorylation and dephosphorylation of AXIN1 regulates assembly and function of the beta-catenin complex. Phosphorylated by CK1 and GSK3B. Dephosphorylated by PPP1CA and PPP2CA. Phosphorylation by CK1 enhances binding of GSK3B to AXIN1. Post-translationally, ADP-ribosylated by tankyrase TNKS and TNKS2. Poly-ADP-ribosylated protein is recognized by RNF146, followed by ubiquitination at 'Lys-48' and subsequent activation of the Wnt signaling pathway. In terms of processing, ubiquitinated by RNF146 when poly-ADP-ribosylated, leading to its degradation and subsequent activation of the Wnt signaling pathway. Sumoylation at Lys-857 and Lys-860 prevents ubiquitination and degradation. Sumoylation is required for AXIN1-mediated JNK activation. Deubiquitinated by USP34, deubiquitinated downstream of beta-catenin stabilization step: deubiquitination is important for nuclear accumulation during Wnt signaling to positively regulate beta-catenin (CTNBB1)-mediated transcription. Ubiquitination by SIAH1 and SIAH2 induces its proteasomal degradation as part of the activation of the Wnt signaling pathway. Ubiquitously expressed.

It is found in the cytoplasm. It localises to the nucleus. The protein resides in the membrane. The protein localises to the cell membrane. In terms of biological role, component of the beta-catenin destruction complex required for regulating CTNNB1 levels through phosphorylation and ubiquitination, and modulating Wnt-signaling. Controls dorsoventral patterning via two opposing effects; down-regulates CTNNB1 to inhibit the Wnt signaling pathway and ventralize embryos, but also dorsalizes embryos by activating a Wnt-independent JNK signaling pathway. In Wnt signaling, probably facilitates the phosphorylation of CTNNB1 and APC by GSK3B. Likely to function as a tumor suppressor. Enhances TGF-beta signaling by recruiting the RNF111 E3 ubiquitin ligase and promoting the degradation of inhibitory SMAD7. Also a component of the AXIN1-HIPK2-TP53 complex which controls cell growth, apoptosis and development. Facilitates the phosphorylation of TP53 by HIPK2 upon ultraviolet irradiation. This Homo sapiens (Human) protein is Axin-1 (AXIN1).